Reading from the N-terminus, the 422-residue chain is MDKIVIEGGVPLRGSVDVSGAKNAALPVIAAALLAEGEHEVRNVPDLADVRTLGKLLGHMGCEVARGEGDRRTVRLRVPAAVAPEAPYELVKTMRASVLVLGPLLARLGRARVSLPGGCAIGARPIDQHLKALTALGAEIRLEHGYVNASVPRGRLRGTVFTFDAQTVTGTENVMMAAALADGETVLRNCAREPEVKDLGDALVAMGALVEGAGTDEIWIEGVPSLRPLSHAVIPDRIEAGTFLVAGALPGNDVTVRGCVAAHQEALVEKLRAVGAEVTKVEGGLRVVGDGRPRPVDVRTAPHPGFPTDMQAQLMVLLCLADGTSRITETVFENRFMHVQELIRLGAHVEVDGRVAMVKGVPELSGAPVMASDLRASAALVLAGLAASGTTEVLRVYHLDRGYERIEEKLAPLGARIRRVRG.

22–23 (KN) serves as a coordination point for phosphoenolpyruvate. Arginine 95 is a binding site for UDP-N-acetyl-alpha-D-glucosamine. The Proton donor role is filled by cysteine 119. Cysteine 119 carries the 2-(S-cysteinyl)pyruvic acid O-phosphothioketal modification. UDP-N-acetyl-alpha-D-glucosamine contacts are provided by residues 124–128 (RPIDQ), aspartate 309, and valine 331.

This sequence belongs to the EPSP synthase family. MurA subfamily.

The protein resides in the cytoplasm. The catalysed reaction is phosphoenolpyruvate + UDP-N-acetyl-alpha-D-glucosamine = UDP-N-acetyl-3-O-(1-carboxyvinyl)-alpha-D-glucosamine + phosphate. The protein operates within cell wall biogenesis; peptidoglycan biosynthesis. Cell wall formation. Adds enolpyruvyl to UDP-N-acetylglucosamine. This is UDP-N-acetylglucosamine 1-carboxyvinyltransferase from Anaeromyxobacter dehalogenans (strain 2CP-1 / ATCC BAA-258).